A 275-amino-acid chain; its full sequence is Large ribosomal subunit protein uL2cz (275 aa).

Disordered regions lie at residues 1-22 and 226-275; these read MAIH…DSQV and NPVD…RRRK.

It belongs to the universal ribosomal protein uL2 family. In terms of assembly, part of the 50S ribosomal subunit.

It is found in the plastid. Its subcellular location is the chloroplast. This Chloranthus spicatus (Chulantree) protein is Large ribosomal subunit protein uL2cz (rpl2-A).